The sequence spans 349 residues: Fructose-bisphosphate aldolase 2, chloroplastic (349 aa).

Substrate-binding residues include R47 and K137. Catalysis depends on E177, which acts as the Proton acceptor. The active-site Schiff-base intermediate with dihydroxyacetone-P is the K219.

This sequence belongs to the class I fructose-bisphosphate aldolase family.

Its subcellular location is the plastid. It is found in the chloroplast. The catalysed reaction is beta-D-fructose 1,6-bisphosphate = D-glyceraldehyde 3-phosphate + dihydroxyacetone phosphate. It functions in the pathway carbohydrate degradation; glycolysis; D-glyceraldehyde 3-phosphate and glycerone phosphate from D-glucose: step 4/4. The polypeptide is Fructose-bisphosphate aldolase 2, chloroplastic (Pisum sativum (Garden pea)).